The sequence spans 327 residues: Endo-1,4-beta-xylanase A (327 aa).

One can recognise a GH10 domain in the interval 1–323 (AASGLEAAMK…KPSYTSTLNT (323 aa)). An intrachain disulfide couples cysteine 81 to cysteine 123. N-linked (GlcNAc...) asparagine glycosylation occurs at asparagine 101. Glutamate 131 (proton donor) is an active-site residue. Glutamate 245 (nucleophile) is an active-site residue. An intrachain disulfide couples cysteine 273 to cysteine 279.

This sequence belongs to the glycosyl hydrolase 10 (cellulase F) family. Monomer.

The protein resides in the secreted. It is found in the extracellular space. It catalyses the reaction Endohydrolysis of (1-&gt;4)-beta-D-xylosidic linkages in xylans.. It participates in glycan degradation; xylan degradation. Its function is as follows. Catalyzes the hydrolysis of the internal glycosidic bonds in heteroxylans, releasing mainly xylobiose and xylotriose. Most active on oat-spelt xylan. This Fusarium oxysporum f. sp. lycopersici (strain 4287 / CBS 123668 / FGSC 9935 / NRRL 34936) (Fusarium vascular wilt of tomato) protein is Endo-1,4-beta-xylanase A.